We begin with the raw amino-acid sequence, 338 residues long: Phenylalanine--tRNA ligase alpha subunit (338 aa).

A Mg(2+)-binding site is contributed by glutamate 252.

Belongs to the class-II aminoacyl-tRNA synthetase family. Phe-tRNA synthetase alpha subunit type 1 subfamily. Tetramer of two alpha and two beta subunits. Mg(2+) is required as a cofactor.

It is found in the cytoplasm. The catalysed reaction is tRNA(Phe) + L-phenylalanine + ATP = L-phenylalanyl-tRNA(Phe) + AMP + diphosphate + H(+). This is Phenylalanine--tRNA ligase alpha subunit from Ectopseudomonas mendocina (strain ymp) (Pseudomonas mendocina).